The chain runs to 477 residues: Bifunctional protein HldE (477 aa).

The segment at 1-318 (MKVTLPDFRR…ENAIRGRADT (318 aa)) is ribokinase. 195-198 (NLSE) is an ATP binding site. D264 is a catalytic residue. The segment at 344–477 (MTNGVFDILH…INIIRQGQND (134 aa)) is cytidylyltransferase.

The protein in the N-terminal section; belongs to the carbohydrate kinase PfkB family. In the C-terminal section; belongs to the cytidylyltransferase family. Homodimer.

The enzyme catalyses D-glycero-beta-D-manno-heptose 7-phosphate + ATP = D-glycero-beta-D-manno-heptose 1,7-bisphosphate + ADP + H(+). The catalysed reaction is D-glycero-beta-D-manno-heptose 1-phosphate + ATP + H(+) = ADP-D-glycero-beta-D-manno-heptose + diphosphate. The protein operates within nucleotide-sugar biosynthesis; ADP-L-glycero-beta-D-manno-heptose biosynthesis; ADP-L-glycero-beta-D-manno-heptose from D-glycero-beta-D-manno-heptose 7-phosphate: step 1/4. It participates in nucleotide-sugar biosynthesis; ADP-L-glycero-beta-D-manno-heptose biosynthesis; ADP-L-glycero-beta-D-manno-heptose from D-glycero-beta-D-manno-heptose 7-phosphate: step 3/4. Its function is as follows. Catalyzes the phosphorylation of D-glycero-D-manno-heptose 7-phosphate at the C-1 position to selectively form D-glycero-beta-D-manno-heptose-1,7-bisphosphate. In terms of biological role, catalyzes the ADP transfer from ATP to D-glycero-beta-D-manno-heptose 1-phosphate, yielding ADP-D-glycero-beta-D-manno-heptose. This chain is Bifunctional protein HldE, found in Edwardsiella ictaluri (strain 93-146).